A 336-amino-acid chain; its full sequence is Glucokinase (336 aa).

12-17 (ADIGGT) contributes to the ATP binding site.

It belongs to the bacterial glucokinase family.

It localises to the cytoplasm. The enzyme catalyses D-glucose + ATP = D-glucose 6-phosphate + ADP + H(+). In Helicobacter acinonychis (strain Sheeba), this protein is Glucokinase.